A 344-amino-acid chain; its full sequence is tRNA N6-adenosine threonylcarbamoyltransferase (344 aa).

Positions 119 and 123 each coordinate Fe cation. Substrate-binding positions include 141 to 145, aspartate 174, glycine 187, aspartate 191, and asparagine 280; that span reads VVSGG. A Fe cation-binding site is contributed by aspartate 310.

The protein belongs to the KAE1 / TsaD family. Fe(2+) serves as cofactor.

It is found in the cytoplasm. The enzyme catalyses L-threonylcarbamoyladenylate + adenosine(37) in tRNA = N(6)-L-threonylcarbamoyladenosine(37) in tRNA + AMP + H(+). In terms of biological role, required for the formation of a threonylcarbamoyl group on adenosine at position 37 (t(6)A37) in tRNAs that read codons beginning with adenine. Is involved in the transfer of the threonylcarbamoyl moiety of threonylcarbamoyl-AMP (TC-AMP) to the N6 group of A37, together with TsaE and TsaB. TsaD likely plays a direct catalytic role in this reaction. The chain is tRNA N6-adenosine threonylcarbamoyltransferase from Listeria welshimeri serovar 6b (strain ATCC 35897 / DSM 20650 / CCUG 15529 / CIP 8149 / NCTC 11857 / SLCC 5334 / V8).